The chain runs to 219 residues: Probable GTP-binding protein EngB (219 aa).

Residues 24 to 207 form the EngB-type G domain; the sequence is VQPEIAFAGR…HALIESWVRP (184 aa). Residues 32 to 39, 59 to 63, 81 to 84, 148 to 151, and 186 to 188 contribute to the GTP site; these read GRSNAGKS, GRTQH, DLPG, TKCD, and FSA. Ser-39 and Thr-61 together coordinate Mg(2+).

It belongs to the TRAFAC class TrmE-Era-EngA-EngB-Septin-like GTPase superfamily. EngB GTPase family. Mg(2+) serves as cofactor.

In terms of biological role, necessary for normal cell division and for the maintenance of normal septation. This chain is Probable GTP-binding protein EngB, found in Burkholderia multivorans (strain ATCC 17616 / 249).